The primary structure comprises 386 residues: L-olivosyl-oleandolide 3-O-methyltransferase (386 aa).

S-adenosyl-L-methionine-binding positions include serine 166, 195 to 201 (EIGIGGY), serine 210, aspartate 227, 245 to 246 (RQ), and aspartate 268. Aspartate 268 is a binding site for Mg(2+). Histidine 271 serves as the catalytic Proton acceptor. The Mg(2+) site is built by glutamate 296 and aspartate 297. The interval 364 to 386 (RRAINKEGGIPHTVPREPFWNDN) is disordered.

Belongs to the methyltransferase OleY/MycE family. In terms of assembly, homodimer. Mg(2+) is required as a cofactor.

It carries out the reaction L-olivosyl-oleandolide + S-adenosyl-L-methionine = L-oleandrosyl-oleandolide + S-adenosyl-L-homocysteine + H(+). It functions in the pathway antibiotic biosynthesis. 3-O-methyltransferase involved in the synthesis of L-oleandrose, a sugar attached to oleandomycin, a macrolide antibiotic. Acts on monoglycosylated macrolactones and mediates the conversion of L-olivosyl-erythronolide B into its 3-O-methylated derivative, L-oleandrosyl-erythronolide B. Also able to methylate other monoglycosylated derivatives, such as L-rhamnosyl- and L-mycarosyl-erythronolide B. The protein is L-olivosyl-oleandolide 3-O-methyltransferase (oleY) of Streptomyces antibioticus.